The primary structure comprises 210 residues: Histidine biosynthesis bifunctional protein HisIE (210 aa).

The phosphoribosyl-AMP cyclohydrolase stretch occupies residues 1 to 106 (MTNYKIDFSK…SCFNTEVPFS (106 aa)). The segment at 107–210 (VQTLAQTVQD…KGERQNIEQW (104 aa)) is phosphoribosyl-ATP pyrophosphohydrolase.

The protein in the N-terminal section; belongs to the PRA-CH family. In the C-terminal section; belongs to the PRA-PH family.

The protein localises to the cytoplasm. It catalyses the reaction 1-(5-phospho-beta-D-ribosyl)-ATP + H2O = 1-(5-phospho-beta-D-ribosyl)-5'-AMP + diphosphate + H(+). The catalysed reaction is 1-(5-phospho-beta-D-ribosyl)-5'-AMP + H2O = 1-(5-phospho-beta-D-ribosyl)-5-[(5-phospho-beta-D-ribosylamino)methylideneamino]imidazole-4-carboxamide. Its pathway is amino-acid biosynthesis; L-histidine biosynthesis; L-histidine from 5-phospho-alpha-D-ribose 1-diphosphate: step 2/9. The protein operates within amino-acid biosynthesis; L-histidine biosynthesis; L-histidine from 5-phospho-alpha-D-ribose 1-diphosphate: step 3/9. The chain is Histidine biosynthesis bifunctional protein HisIE (hisI) from Staphylococcus aureus (strain COL).